We begin with the raw amino-acid sequence, 404 residues long: MSNPSLSSKLLGGNLVLRIAIGLVLGACLALVNPDWAKNVGVLGQFFVKSLRAIAPILVFVLVLSAIANKEVGSDSKLKPILVMYVLGTFVAALTAVVLSFMFPTTLELVSNPDNLNPPQGIGEIIKTVVFNLVDNPLQALANANFIGILAWAIGLGIALRHAAPSTKTFLNDFAEAVSFVVKVVIAFAPIGVFGLVAETIATNGADAFVGYARLLGVLLGAMVIVAFVLNPLIVFWKIRRNPYPLTLTCLRESGVTAFFTRSSAANIPVNMNLAKRLGVRDEIASVAIPLGATINMAGAAITVTVLTLAAAYTQGIQPDFATALLLSIVASVCACGASGVAGGSLLLIPLACSLFNIPNDIAAQVIGVGFIIGVIQDSAETALNSSTDVLFTAAVSQAEDQKA.

Transmembrane regions (helical) follow at residues 12 to 32, 53 to 73, 81 to 101, 140 to 160, 177 to 197, 216 to 236, 287 to 307, 329 to 349, and 356 to 376; these read GGNL…LALV, AIAP…KEVG, ILVM…VLSF, ALAN…GIAL, AVSF…FGLV, LGVL…LIVF, VAIP…VTVL, IVAS…LLLI, and FNIP…IGVI.

This sequence belongs to the dicarboxylate/amino acid:cation symporter (DAACS) (TC 2.A.23) family.

It localises to the cell inner membrane. It catalyses the reaction L-serine(in) + Na(+)(in) = L-serine(out) + Na(+)(out). The catalysed reaction is L-threonine(in) + Na(+)(in) = L-threonine(out) + Na(+)(out). In terms of biological role, involved in the import of serine and threonine into the cell, with the concomitant import of sodium (symport system). The chain is Serine/threonine transporter SstT from Actinobacillus pleuropneumoniae serotype 7 (strain AP76).